A 166-amino-acid chain; its full sequence is PTS system glucose-specific EIIA component (166 aa).

Positions 34–138 (DPVFAQKMMG…SVISPIIITN (105 aa)) constitute a PTS EIIA type-1 domain. Zn(2+) is bound by residues histidine 71 and histidine 86. Histidine 86 serves as the catalytic Tele-phosphohistidine intermediate; for EIIA activity. Histidine 86 is subject to Phosphohistidine; by HPr.

In terms of assembly, heterodimer with glycerol kinase (glpk). The cofactor is Zn(2+).

The protein resides in the cytoplasm. The phosphoenolpyruvate-dependent sugar phosphotransferase system (sugar PTS), a major carbohydrate active transport system, catalyzes the phosphorylation of incoming sugar substrates concomitantly with their translocation across the cell membrane. The enzyme II complex composed of PtsG and Crr is involved in glucose transport. In Staphylococcus aureus (strain Mu50 / ATCC 700699), this protein is PTS system glucose-specific EIIA component (crr).